A 524-amino-acid polypeptide reads, in one-letter code: Anthranilate synthase component 1 (524 aa).

L-tryptophan-binding positions include Ser55 and 297–299; that span reads PYM. 332-333 provides a ligand contact to chorismate; sequence GT. Mg(2+) is bound at residue Glu359. Residues Tyr447, Arg467, 485-487, and Gly487 contribute to the chorismate site; that span reads GAG. Glu500 is a binding site for Mg(2+).

This sequence belongs to the anthranilate synthase component I family. As to quaternary structure, heterotetramer consisting of two non-identical subunits: a beta subunit (TrpG) and a large alpha subunit (TrpE). Mg(2+) is required as a cofactor.

The enzyme catalyses chorismate + L-glutamine = anthranilate + pyruvate + L-glutamate + H(+). Its pathway is amino-acid biosynthesis; L-tryptophan biosynthesis; L-tryptophan from chorismate: step 1/5. Its activity is regulated as follows. Feedback inhibited by tryptophan. Its function is as follows. Part of a heterotetrameric complex that catalyzes the two-step biosynthesis of anthranilate, an intermediate in the biosynthesis of L-tryptophan. In the first step, the glutamine-binding beta subunit (TrpG) of anthranilate synthase (AS) provides the glutamine amidotransferase activity which generates ammonia as a substrate that, along with chorismate, is used in the second step, catalyzed by the large alpha subunit of AS (TrpE) to produce anthranilate. In the absence of TrpG, TrpE can synthesize anthranilate directly from chorismate and high concentrations of ammonia. In Haloferax volcanii (strain ATCC 29605 / DSM 3757 / JCM 8879 / NBRC 14742 / NCIMB 2012 / VKM B-1768 / DS2) (Halobacterium volcanii), this protein is Anthranilate synthase component 1 (trpE).